Consider the following 250-residue polypeptide: Probable transcriptional regulatory protein PERMA_0079 (250 aa).

It belongs to the TACO1 family.

The protein localises to the cytoplasm. This is Probable transcriptional regulatory protein PERMA_0079 from Persephonella marina (strain DSM 14350 / EX-H1).